The primary structure comprises 118 residues: Holo-[acyl-carrier-protein] synthase (118 aa).

Mg(2+)-binding residues include aspartate 8 and glutamate 58.

Belongs to the P-Pant transferase superfamily. AcpS family. Mg(2+) serves as cofactor.

The protein localises to the cytoplasm. The catalysed reaction is apo-[ACP] + CoA = holo-[ACP] + adenosine 3',5'-bisphosphate + H(+). Transfers the 4'-phosphopantetheine moiety from coenzyme A to a Ser of acyl-carrier-protein. The polypeptide is Holo-[acyl-carrier-protein] synthase (Listeria monocytogenes serotype 4b (strain CLIP80459)).